Reading from the N-terminus, the 378-residue chain is UDP-4-amino-4-deoxy-L-arabinose--oxoglutarate aminotransferase (378 aa).

Lys-182 carries the N6-(pyridoxal phosphate)lysine modification.

Belongs to the DegT/DnrJ/EryC1 family. ArnB subfamily. Homodimer. Requires pyridoxal 5'-phosphate as cofactor.

The catalysed reaction is UDP-4-amino-4-deoxy-beta-L-arabinose + 2-oxoglutarate = UDP-beta-L-threo-pentopyranos-4-ulose + L-glutamate. Its pathway is nucleotide-sugar biosynthesis; UDP-4-deoxy-4-formamido-beta-L-arabinose biosynthesis; UDP-4-deoxy-4-formamido-beta-L-arabinose from UDP-alpha-D-glucuronate: step 2/3. It participates in bacterial outer membrane biogenesis; lipopolysaccharide biosynthesis. In terms of biological role, catalyzes the conversion of UDP-4-keto-arabinose (UDP-Ara4O) to UDP-4-amino-4-deoxy-L-arabinose (UDP-L-Ara4N). The modified arabinose is attached to lipid A and is required for resistance to polymyxin and cationic antimicrobial peptides. The chain is UDP-4-amino-4-deoxy-L-arabinose--oxoglutarate aminotransferase from Aeromonas salmonicida (strain A449).